The sequence spans 355 residues: Adenine deaminase (355 aa).

3 residues coordinate Zn(2+): H23, H25, and H211. E214 serves as the catalytic Proton donor. A Zn(2+)-binding site is contributed by D292. D293 contributes to the substrate binding site.

The protein belongs to the metallo-dependent hydrolases superfamily. Adenosine and AMP deaminases family. Adenine deaminase type 2 subfamily. The cofactor is Zn(2+).

It is found in the cytoplasm. The protein localises to the nucleus. It catalyses the reaction adenine + H2O + H(+) = hypoxanthine + NH4(+). In terms of biological role, catalyzes the hydrolytic deamination of adenine to hypoxanthine. Plays an important role in the purine salvage pathway and in nitrogen catabolism. The sequence is that of Adenine deaminase from Kluyveromyces lactis (strain ATCC 8585 / CBS 2359 / DSM 70799 / NBRC 1267 / NRRL Y-1140 / WM37) (Yeast).